The primary structure comprises 207 residues: Ankyrin repeat-containing protein P1E11.10 (207 aa).

ANK repeat units lie at residues 36–65 (NGYT…DINI) and 69–98 (DGET…TVKN).

It localises to the cytoplasm. The protein localises to the nucleus. This chain is Ankyrin repeat-containing protein P1E11.10, found in Schizosaccharomyces pombe (strain 972 / ATCC 24843) (Fission yeast).